Consider the following 416-residue polypeptide: Serine hydroxymethyltransferase (416 aa).

Residues leucine 121 and 125-127 (GHL) each bind (6S)-5,6,7,8-tetrahydrofolate. Position 229 is an N6-(pyridoxal phosphate)lysine (lysine 229).

The protein belongs to the SHMT family. Homodimer. Pyridoxal 5'-phosphate is required as a cofactor.

It is found in the cytoplasm. It catalyses the reaction (6R)-5,10-methylene-5,6,7,8-tetrahydrofolate + glycine + H2O = (6S)-5,6,7,8-tetrahydrofolate + L-serine. It functions in the pathway one-carbon metabolism; tetrahydrofolate interconversion. It participates in amino-acid biosynthesis; glycine biosynthesis; glycine from L-serine: step 1/1. Functionally, catalyzes the reversible interconversion of serine and glycine with tetrahydrofolate (THF) serving as the one-carbon carrier. This reaction serves as the major source of one-carbon groups required for the biosynthesis of purines, thymidylate, methionine, and other important biomolecules. Also exhibits THF-independent aldolase activity toward beta-hydroxyamino acids, producing glycine and aldehydes, via a retro-aldol mechanism. The sequence is that of Serine hydroxymethyltransferase from Bordetella avium (strain 197N).